We begin with the raw amino-acid sequence, 465 residues long: 3-isopropylmalate dehydratase large subunit (465 aa).

Positions 347, 407, and 410 each coordinate [4Fe-4S] cluster. Residues 416 to 443 (DTLRPGERSASTSNRNFEGRQGPGGRTH) are disordered.

It belongs to the aconitase/IPM isomerase family. LeuC type 1 subfamily. As to quaternary structure, heterodimer of LeuC and LeuD. Requires [4Fe-4S] cluster as cofactor.

The enzyme catalyses (2R,3S)-3-isopropylmalate = (2S)-2-isopropylmalate. Its pathway is amino-acid biosynthesis; L-leucine biosynthesis; L-leucine from 3-methyl-2-oxobutanoate: step 2/4. In terms of biological role, catalyzes the isomerization between 2-isopropylmalate and 3-isopropylmalate, via the formation of 2-isopropylmaleate. This Frankia alni (strain DSM 45986 / CECT 9034 / ACN14a) protein is 3-isopropylmalate dehydratase large subunit.